Here is a 193-residue protein sequence, read N- to C-terminus: uncharacterized protein (193 aa).

4 helical membrane-spanning segments follow: residues 8–28 (GVLV…VVAI), 46–66 (FFIA…VASA), 82–102 (GLSI…ALVV), and 141–161 (IALT…LLAA).

The protein to M.leprae ML1222.

It is found in the cell membrane. This is an uncharacterized protein from Mycobacterium tuberculosis (strain CDC 1551 / Oshkosh).